The sequence spans 346 residues: Magnesium-protoporphyrin IX monomethyl ester [oxidative] cyclase (346 aa).

Belongs to the AcsF family. Requires Fe cation as cofactor.

It catalyses the reaction Mg-protoporphyrin IX 13-monomethyl ester + 3 NADPH + 3 O2 + 2 H(+) = 3,8-divinyl protochlorophyllide a + 3 NADP(+) + 5 H2O. It participates in porphyrin-containing compound metabolism; chlorophyll biosynthesis (light-independent). In terms of biological role, catalyzes the formation of the isocyclic ring in chlorophyll biosynthesis. Mediates the cyclase reaction, which results in the formation of divinylprotochlorophyllide (Pchlide) characteristic of all chlorophylls from magnesium-protoporphyrin IX 13-monomethyl ester (MgPMME). This is Magnesium-protoporphyrin IX monomethyl ester [oxidative] cyclase from Gloeobacter violaceus (strain ATCC 29082 / PCC 7421).